Reading from the N-terminus, the 216-residue chain is Large ribosomal subunit protein uL1 (216 aa).

It belongs to the universal ribosomal protein uL1 family. As to quaternary structure, part of the 50S ribosomal subunit.

Its function is as follows. Binds directly to 23S rRNA. Probably involved in E site tRNA release. Protein L1 is also a translational repressor protein, it controls the translation of its operon by binding to its mRNA. This Thermococcus kodakarensis (strain ATCC BAA-918 / JCM 12380 / KOD1) (Pyrococcus kodakaraensis (strain KOD1)) protein is Large ribosomal subunit protein uL1.